Consider the following 327-residue polypeptide: Malate dehydrogenase (327 aa).

11–17 (GAAGQIS) serves as a coordination point for NAD(+). The substrate site is built by R92 and R98. NAD(+) is bound by residues N105, Q112, and 129-131 (VGN). N131 and R162 together coordinate substrate. H187 acts as the Proton acceptor in catalysis.

This sequence belongs to the LDH/MDH superfamily. MDH type 2 family.

It carries out the reaction (S)-malate + NAD(+) = oxaloacetate + NADH + H(+). In terms of biological role, catalyzes the reversible oxidation of malate to oxaloacetate. The protein is Malate dehydrogenase of Nitrosomonas europaea (strain ATCC 19718 / CIP 103999 / KCTC 2705 / NBRC 14298).